The primary structure comprises 319 residues: 4-hydroxy-3-methylbut-2-enyl diphosphate reductase (319 aa).

A [4Fe-4S] cluster-binding site is contributed by Cys-12. (2E)-4-hydroxy-3-methylbut-2-enyl diphosphate-binding residues include His-41 and His-74. Dimethylallyl diphosphate-binding residues include His-41 and His-74. Isopentenyl diphosphate-binding residues include His-41 and His-74. Cys-96 serves as a coordination point for [4Fe-4S] cluster. Residue His-124 coordinates (2E)-4-hydroxy-3-methylbut-2-enyl diphosphate. His-124 lines the dimethylallyl diphosphate pocket. His-124 provides a ligand contact to isopentenyl diphosphate. Residue Glu-126 is the Proton donor of the active site. A (2E)-4-hydroxy-3-methylbut-2-enyl diphosphate-binding site is contributed by Thr-167. Residue Cys-197 participates in [4Fe-4S] cluster binding. (2E)-4-hydroxy-3-methylbut-2-enyl diphosphate is bound by residues Ser-225, Ser-226, Asn-227, and Ser-269. Ser-225, Ser-226, Asn-227, and Ser-269 together coordinate dimethylallyl diphosphate. The isopentenyl diphosphate site is built by Ser-225, Ser-226, Asn-227, and Ser-269.

The protein belongs to the IspH family. As to quaternary structure, homodimer. [4Fe-4S] cluster is required as a cofactor.

The enzyme catalyses isopentenyl diphosphate + 2 oxidized [2Fe-2S]-[ferredoxin] + H2O = (2E)-4-hydroxy-3-methylbut-2-enyl diphosphate + 2 reduced [2Fe-2S]-[ferredoxin] + 2 H(+). It carries out the reaction dimethylallyl diphosphate + 2 oxidized [2Fe-2S]-[ferredoxin] + H2O = (2E)-4-hydroxy-3-methylbut-2-enyl diphosphate + 2 reduced [2Fe-2S]-[ferredoxin] + 2 H(+). It participates in isoprenoid biosynthesis; dimethylallyl diphosphate biosynthesis; dimethylallyl diphosphate from (2E)-4-hydroxy-3-methylbutenyl diphosphate: step 1/1. Its pathway is isoprenoid biosynthesis; isopentenyl diphosphate biosynthesis via DXP pathway; isopentenyl diphosphate from 1-deoxy-D-xylulose 5-phosphate: step 6/6. Its function is as follows. Catalyzes the conversion of 1-hydroxy-2-methyl-2-(E)-butenyl 4-diphosphate (HMBPP) into a mixture of isopentenyl diphosphate (IPP) and dimethylallyl diphosphate (DMAPP). Acts in the terminal step of the DOXP/MEP pathway for isoprenoid precursor biosynthesis. The polypeptide is 4-hydroxy-3-methylbut-2-enyl diphosphate reductase (Buchnera aphidicola subsp. Acyrthosiphon pisum (strain Tuc7)).